Reading from the N-terminus, the 462-residue chain is Argininosuccinate lyase (462 aa).

Belongs to the lyase 1 family. Argininosuccinate lyase subfamily.

It is found in the cytoplasm. The catalysed reaction is 2-(N(omega)-L-arginino)succinate = fumarate + L-arginine. The protein operates within amino-acid biosynthesis; L-arginine biosynthesis; L-arginine from L-ornithine and carbamoyl phosphate: step 3/3. This chain is Argininosuccinate lyase, found in Rippkaea orientalis (strain PCC 8801 / RF-1) (Cyanothece sp. (strain PCC 8801)).